The following is a 394-amino-acid chain: NAD(P)H-quinone oxidoreductase subunit H (394 aa).

Belongs to the complex I 49 kDa subunit family. As to quaternary structure, NDH-1 can be composed of about 15 different subunits; different subcomplexes with different compositions have been identified which probably have different functions.

The protein localises to the cellular thylakoid membrane. The catalysed reaction is a plastoquinone + NADH + (n+1) H(+)(in) = a plastoquinol + NAD(+) + n H(+)(out). The enzyme catalyses a plastoquinone + NADPH + (n+1) H(+)(in) = a plastoquinol + NADP(+) + n H(+)(out). In terms of biological role, NDH-1 shuttles electrons from an unknown electron donor, via FMN and iron-sulfur (Fe-S) centers, to quinones in the respiratory and/or the photosynthetic chain. The immediate electron acceptor for the enzyme in this species is believed to be plastoquinone. Couples the redox reaction to proton translocation, and thus conserves the redox energy in a proton gradient. Cyanobacterial NDH-1 also plays a role in inorganic carbon-concentration. This chain is NAD(P)H-quinone oxidoreductase subunit H, found in Synechococcus sp. (strain CC9311).